Reading from the N-terminus, the 108-residue chain is UPF0145 protein HDEF_1024 (108 aa).

Belongs to the UPF0145 family.

The sequence is that of UPF0145 protein HDEF_1024 from Hamiltonella defensa subsp. Acyrthosiphon pisum (strain 5AT).